The following is a 311-amino-acid chain: Transmembrane protein DDB_G0273707/DDB_G0273361 (311 aa).

The tract at residues 1 to 113 is disordered; sequence MNEIEVDNLS…NNNNNKNENN (113 aa). Asparagine 8 carries N-linked (GlcNAc...) asparagine glycosylation. Over residues 9 to 18 the composition is skewed to polar residues; it reads LSHTNKNVAT. N-linked (GlcNAc...) asparagine glycosylation is found at asparagine 35, asparagine 38, asparagine 62, and asparagine 76. 2 stretches are compositionally biased toward low complexity: residues 37 to 67 and 76 to 111; these read SNNS…SNSN and NNSN…NKNE. Residues 95 to 124 adopt a coiled-coil conformation; it reads NNNNNNNNNNNNNNKNENNNKIKNEKINIL. Transmembrane regions (helical) follow at residues 150–170, 181–201, 208–228, 235–255, and 276–296; these read LEEI…LALL, IFLL…PKSP, LVLG…ALVY, VACA…KSIH, and FYYI…TALI.

Its subcellular location is the membrane. This Dictyostelium discoideum (Social amoeba) protein is Transmembrane protein DDB_G0273707/DDB_G0273361.